Reading from the N-terminus, the 457-residue chain is DDB1- and CUL4-associated factor 10 (457 aa).

WD repeat units follow at residues 65-104 (RTHG…HIKT), 108-146 (AHED…SKAC), 150-189 (GHTS…EDGC), and 195-234 (FHTR…KSLE). The segment covering 246–265 (TASTSDMTSTSSETRPSSSP) has biased composition (low complexity). The disordered stretch occupies residues 246 to 304 (TASTSDMTSTSSETRPSSSPCHNSDSGPLFEKHMSRSSQREGTSPRNSLEVLTPEVPGE). A compositionally biased stretch (polar residues) spans 281–292 (RSSQREGTSPRN). WD repeat units follow at residues 306–346 (DRGN…QEGT), 368–406 (VGRG…KELV), and 424–457 (SHKD…QPKF).

The protein belongs to the WD repeat DCAF10 family.

Its pathway is protein modification; protein ubiquitination. In terms of biological role, may function as a substrate receptor for CUL4-DDB1 E3 ubiquitin-protein ligase complex. This chain is DDB1- and CUL4-associated factor 10 (dcaf10), found in Xenopus laevis (African clawed frog).